The primary structure comprises 501 residues: L-arabinose isomerase (501 aa).

Residues glutamate 306, glutamate 333, histidine 350, and histidine 450 each coordinate Mn(2+).

This sequence belongs to the arabinose isomerase family. Homohexamer. Mn(2+) is required as a cofactor.

The enzyme catalyses beta-L-arabinopyranose = L-ribulose. Its pathway is carbohydrate degradation; L-arabinose degradation via L-ribulose; D-xylulose 5-phosphate from L-arabinose (bacterial route): step 1/3. Functionally, catalyzes the conversion of L-arabinose to L-ribulose. This Serratia proteamaculans (strain 568) protein is L-arabinose isomerase.